The chain runs to 619 residues: 4-hydroxyphenylalkanoate adenylyltransferase (619 aa).

Belongs to the ATP-dependent AMP-binding enzyme family.

The enzyme catalyses 17-(4-hydroxyphenyl)heptadecanoate + holo-[(phenol)carboxyphthiodiolenone synthase] + ATP = 17-(4-hydroxyphenyl)heptadecanoyl-[(phenol)carboxyphthiodiolenone synthase] + AMP + diphosphate. The catalysed reaction is 19-(4-hydroxyphenyl)nonadecanoate + holo-[(phenol)carboxyphthiodiolenone synthase] + ATP = 19-(4-hydroxyphenyl)nonadecanoyl-[(phenol)carboxyphthiodiolenone synthase] + AMP + diphosphate. It carries out the reaction dodecanoate + ATP + H(+) = dodecanoyl-AMP + diphosphate. Its pathway is lipid metabolism; fatty acid biosynthesis. Its function is as follows. Catalyzes the activation of long-chain fatty acids as acyl-adenylates (acyl-AMP), which are then transferred to the multifunctional polyketide synthase PpsA for further chain extension. Involved in the biosynthesis of phenolphthiocerol, which is an important intermediate in the biosynthesis of phenolic glycolipid (PGL), also called mycosid B. In Mycobacterium tuberculosis (strain ATCC 25618 / H37Rv), this protein is 4-hydroxyphenylalkanoate adenylyltransferase (fadD29).